Here is a 443-residue protein sequence, read N- to C-terminus: UDP-N-acetylmuramate--L-alanine ligase (443 aa).

110–116 (GAHGKTS) is an ATP binding site.

Belongs to the MurCDEF family.

Its subcellular location is the cytoplasm. It catalyses the reaction UDP-N-acetyl-alpha-D-muramate + L-alanine + ATP = UDP-N-acetyl-alpha-D-muramoyl-L-alanine + ADP + phosphate + H(+). The protein operates within cell wall biogenesis; peptidoglycan biosynthesis. In terms of biological role, cell wall formation. In Streptococcus equi subsp. zooepidemicus (strain H70), this protein is UDP-N-acetylmuramate--L-alanine ligase.